We begin with the raw amino-acid sequence, 580 residues long: Protein O-linked-mannose beta-1,4-N-acetylglucosaminyltransferase 2 (580 aa).

Residues 1 to 4 lie on the Cytoplasmic side of the membrane; that stretch reads MHLS. A helical; Signal-anchor for type II membrane protein membrane pass occupies residues 5 to 25; the sequence is AVLNALLVSVLAAVLWKHVRL. Over 26–580 the chain is Lumenal; sequence REHAASLEEE…PFADVLVCST (555 aa). Residues asparagine 99 and asparagine 276 are each glycosylated (N-linked (GlcNAc...) asparagine). One can recognise a Fibronectin type-III domain in the interval 488–580; that stretch reads ARCQASVQGA…PFADVLVCST (93 aa).

Belongs to the glycosyltransferase 61 family.

The protein localises to the endoplasmic reticulum membrane. The catalysed reaction is 3-O-(alpha-D-mannosyl)-L-threonyl-[protein] + UDP-N-acetyl-alpha-D-glucosamine = 3-O-(N-acetyl-beta-D-glucosaminyl-(1-&gt;4)-alpha-D-mannosyl)-L-threonyl-[protein] + UDP + H(+). The protein operates within protein modification; protein glycosylation. In terms of biological role, O-linked mannose beta-1,4-N-acetylglucosaminyltransferase that transfers UDP-N-acetyl-D-glucosamine to the 4-position of the mannose to generate N-acetyl-D-glucosamine-beta-1,4-O-D-mannosylprotein. Involved in the biosynthesis of the phosphorylated O-mannosyl trisaccharide (N-acetylgalactosamine-beta-3-N-acetylglucosamine-beta-4-(phosphate-6-)mannose), a carbohydrate structure present in alpha-dystroglycan (DAG1), which is required for binding laminin G-like domain-containing extracellular proteins with high affinity. The sequence is that of Protein O-linked-mannose beta-1,4-N-acetylglucosaminyltransferase 2 (POMGNT2) from Bos taurus (Bovine).